Reading from the N-terminus, the 229-residue chain is Ribonuclease 3 (229 aa).

One can recognise an RNase III domain in the interval 5–127 (LDRLERKLGY…LIGAIYLDTG (123 aa)). E40 serves as a coordination point for Mg(2+). The active site involves D44. Residues D113 and E116 each coordinate Mg(2+). E116 is a catalytic residue. The DRBM domain maps to 154-224 (DPKTRLQEFL…AAAALVALGV (71 aa)).

Belongs to the ribonuclease III family. Homodimer. It depends on Mg(2+) as a cofactor.

It is found in the cytoplasm. The enzyme catalyses Endonucleolytic cleavage to 5'-phosphomonoester.. Functionally, digests double-stranded RNA. Involved in the processing of primary rRNA transcript to yield the immediate precursors to the large and small rRNAs (23S and 16S). Processes some mRNAs, and tRNAs when they are encoded in the rRNA operon. Processes pre-crRNA and tracrRNA of type II CRISPR loci if present in the organism. In Pseudomonas paraeruginosa (strain DSM 24068 / PA7) (Pseudomonas aeruginosa (strain PA7)), this protein is Ribonuclease 3.